A 352-amino-acid polypeptide reads, in one-letter code: 7,8-didemethyl-8-hydroxy-5-deazariboflavin synthase (352 aa).

The region spanning 35–275 (ITFSKNAFIP…EDISIQVPPN (241 aa)) is the Radical SAM core domain. The [4Fe-4S] cluster site is built by cysteine 49, cysteine 53, and cysteine 56.

This sequence belongs to the radical SAM superfamily. CofG family. As to quaternary structure, consists of two subunits, CofG and CofH. It depends on [4Fe-4S] cluster as a cofactor.

It catalyses the reaction 5-amino-5-(4-hydroxybenzyl)-6-(D-ribitylimino)-5,6-dihydrouracil + S-adenosyl-L-methionine = 7,8-didemethyl-8-hydroxy-5-deazariboflavin + 5'-deoxyadenosine + L-methionine + NH4(+) + H(+). The protein operates within cofactor biosynthesis; coenzyme F0 biosynthesis. Catalyzes the radical-mediated synthesis of 7,8-didemethyl-8-hydroxy-5-deazariboflavin from 5-amino-5-(4-hydroxybenzyl)-6-(D-ribitylimino)-5,6-dihydrouracil. This Methanococcus maripaludis (strain C6 / ATCC BAA-1332) protein is 7,8-didemethyl-8-hydroxy-5-deazariboflavin synthase.